Consider the following 253-residue polypeptide: RNA polymerase sigma factor SigI6 (253 aa).

Positions glutamate 63–isoleucine 76 match the Polymerase core binding motif. Positions threonine 203 to lysine 222 form a DNA-binding region, H-T-H motif.

The protein belongs to the sigma-70 factor family. SigI subfamily. As to quaternary structure, interacts with RsgI6.

Its subcellular location is the cytoplasm. Its activity is regulated as follows. Negatively regulated by the anti-sigma-I factor RsgI6. Binding of the polysaccharide substrate to RsgI6 may lead to the release and activation of SigI6. Its function is as follows. Sigma factors are initiation factors that promote the attachment of RNA polymerase to specific initiation sites and are then released. This sigma factor is involved in regulation of cellulosomal genes via an external polysaccharide-sensing mechanism. Recognizes the predicted promoters associated with sigI6 itself, xyn11B, xyn10D, xyn10Z, xyn10Y, cel9V, cseP, sigI1, cipA, and rsgI5. In Acetivibrio thermocellus (strain ATCC 27405 / DSM 1237 / JCM 9322 / NBRC 103400 / NCIMB 10682 / NRRL B-4536 / VPI 7372) (Clostridium thermocellum), this protein is RNA polymerase sigma factor SigI6.